Consider the following 278-residue polypeptide: Acyl-[acyl-carrier-protein]--UDP-N-acetylglucosamine O-acyltransferase (278 aa).

It belongs to the transferase hexapeptide repeat family. LpxA subfamily. In terms of assembly, homotrimer.

It localises to the cytoplasm. It catalyses the reaction a (3R)-hydroxyacyl-[ACP] + UDP-N-acetyl-alpha-D-glucosamine = a UDP-3-O-[(3R)-3-hydroxyacyl]-N-acetyl-alpha-D-glucosamine + holo-[ACP]. Its pathway is glycolipid biosynthesis; lipid IV(A) biosynthesis; lipid IV(A) from (3R)-3-hydroxytetradecanoyl-[acyl-carrier-protein] and UDP-N-acetyl-alpha-D-glucosamine: step 1/6. In terms of biological role, involved in the biosynthesis of lipid A, a phosphorylated glycolipid that anchors the lipopolysaccharide to the outer membrane of the cell. The sequence is that of Acyl-[acyl-carrier-protein]--UDP-N-acetylglucosamine O-acyltransferase from Brucella anthropi (strain ATCC 49188 / DSM 6882 / CCUG 24695 / JCM 21032 / LMG 3331 / NBRC 15819 / NCTC 12168 / Alc 37) (Ochrobactrum anthropi).